The chain runs to 307 residues: Probable porphobilinogen deaminase (307 aa).

C240 carries the S-(dipyrrolylmethanemethyl)cysteine modification.

This sequence belongs to the HMBS family. Dipyrromethane is required as a cofactor.

It catalyses the reaction 4 porphobilinogen + H2O = hydroxymethylbilane + 4 NH4(+). Its pathway is porphyrin-containing compound metabolism; protoporphyrin-IX biosynthesis; coproporphyrinogen-III from 5-aminolevulinate: step 2/4. Its function is as follows. Tetrapolymerization of the monopyrrole PBG into the hydroxymethylbilane pre-uroporphyrinogen in several discrete steps. This chain is Probable porphobilinogen deaminase (hemC), found in Aeropyrum pernix (strain ATCC 700893 / DSM 11879 / JCM 9820 / NBRC 100138 / K1).